The sequence spans 893 residues: Dystroglycan 1 (893 aa).

A signal peptide spans 1-27 (MSVDNWLLHPLWGQTFLLLLSVAVAQA). A required for laminin recognition region spans residues 28–406 (HWPSEPSEAV…GQIRPTLTIP (379 aa)). Residues 47–69 (SMHSVLSDFQEAVPTVVGIPDGT) are O-glycosylated at one site. N139 is a glycosylation site (N-linked (GlcNAc...) asparagine). An intrachain disulfide couples C180 to C262. Residues 314–483 (ATPTPVTAIG…PPTRIRTTTS (170 aa)) are mucin-like domain. 3 O-linked (Man6P...) threonine glycosylation sites follow: T315, T317, and T377. The disordered stretch occupies residues 379–498 (TLGPIQPTRV…GEPNQRPELK (120 aa)). A compositionally biased stretch (low complexity) spans 409–445 (VEPTAVITPPTTTTKKPRVSTPKPATPSTDSSTTTTR). Residues 461 to 483 (TTKAPITRLETASPPTRIRTTTS) are O-glycosylated at seven sites with GalNAc. Positions 601–710 (KAPARFKARL…LSIAVTGSGS (110 aa)) constitute a Peptidase S72 domain. 3 N-linked (GlcNAc...) asparagine glycosylation sites follow: N639, N647, and N659. At 652–751 (SIVVEWTNNT…SSEDDVYLHT (100 aa)) the chain is on the extracellular side. C667 and C711 form a disulfide bridge. Residues 722–744 (PSPGSSAAPATEVPDRDPEKSSE) are disordered. A compositionally biased stretch (basic and acidic residues) spans 734-744 (VPDRDPEKSSE). A helical membrane pass occupies residues 752–772 (VIPAVVVAAILLIAGIIAMIC). Topologically, residues 773-893 (YRKKRKGKLT…YRSPPPYVPP (121 aa)) are cytoplasmic. Residues 774 to 780 (RKKRKGK) carry the Nuclear localization signal motif. Position 788 is a phosphothreonine (T788). Residues 817-893 (LQEEKAPLPP…YRSPPPYVPP (77 aa)) form a required for interaction with CAV3 region. Residues 821 to 893 (KAPLPPPEYP…YRSPPPYVPP (73 aa)) form a disordered region. A compositionally biased stretch (polar residues) spans 830–844 (PNQSMPETTPLNQDT). Over residues 857-868 (NAPPYQPPPPFT) the composition is skewed to pro residues. The required for binding DMD and UTRN stretch occupies residues 878-893 (PKNMTPYRSPPPYVPP). A PPXY motif motif is present at residues 887–890 (PPPY). Residue Y890 is modified to Phosphotyrosine; by SRC.

In terms of assembly, monomer. Heterodimer of alpha- and beta-dystroglycan subunits which are the central components of the dystrophin-glycoprotein complex. This complex then can form a dystrophin-associated glycoprotein complex (DGC) which is composed of three subcomplexes: a cytoplasmic complex comprised of DMD (or UTRN), DTNA and a number of syntrophins, such as SNTB1, SNTB2, SNTG1 and SNTG2, the transmembrane dystroglycan complex, and the sarcoglycan-sarcospan complex. Interacts (via the N-terminal of alphaDAG1) with LARGE1; the interaction enhances laminin binding. Interacts with SGCD. Interacts with AGR2 and AGR3. Interacts (betaDAG1) with DMD; the interaction is inhibited by phosphorylation on the PPXY motif. Interacts (betaDAG1, via its PPXY motif) with UTRN (via its WWW and ZZ domains); the interaction is inhibited by phosphorylation on the PPXY motif. Interacts (betaDAG1, via its phosphorylated PPXY motif) with the SH2 domain-containing proteins, FYN, CSK, NCK and SHC. Interacts (betaDAG1) with CAV3 (via a central WW-like domain); the interaction disrupts the binding of DMD. BetaDAG1 directly interacts with ANK3, but not with ANK2; this interaction does not interfere with DMD-binding and is required for retention at costameres. Identified in a dystroglycan complex that contains at least PRX, DRP2, UTRN, DMD and DAG1. Interacts with POMGNT1. BetaDAG1 interacts with CD93. In terms of processing, O-glycosylated. POMGNT1 catalyzes the initial addition of N-acetylglucosamine, giving rise to the GlcNAc(beta1-2)Man(alpha1-)O-Ser/Thr moiety and thus providing the necessary basis for the addition of further carbohydrate moieties. Heavily O-glycosylated comprising of up to two thirds of its mass and the carbohydrate composition differs depending on tissue type. Mucin-type O-glycosylation is important for ligand binding activity. O-mannosylation is found in high abundance in both brain and muscle where the most abundant glycan is Sia-alpha-2-3-Gal-beta-1-4-Glc-NAc-beta-1-2-Man. In muscle, glycosylation on Thr-315, Thr-317, Thr-379 by a phosphorylated O-mannosyl glycan with the structure 2-(N-acetylamido)-2-deoxygalactosyl-beta-1,3-2-(N-acetylamido)-2-deoxyglucosyl-beta-1,4-6-phosphomannose is mediated by like-acetylglucosaminyltransferase (LARGE1) protein amd is required for laminin binding. O-glycosylated in the N-terminal region with a core 1 or possibly core 8 glycan. The brain form displays a unique glycosylation pattern which is absent in other tissues; this form shows enhanced binding to laminin LAMA5 compared to the skeletal muscle form. N-glycosylated. Post-translationally, autolytic cleavage produces the alpha and beta subunits. In cutaneous cells, as well as in certain pathological conditions, shedding of beta-dystroglycan can occur releasing a peptide of about 30 kDa. In terms of processing, SRC-mediated phosphorylation of the PPXY motif of the beta subunit recruits SH2 domain-containing proteins, but inhibits binding to WWW domain-containing proteins, DMD and UTRN. This phosphorylation also inhibits nuclear entry. As to expression, detected in brain and kidney (at protein level). Detected in sciatic nerve (at protein level). Expressed in neurons and muscle cells (at protein level). Expressed in a variety of tissues. In brain, expressed in the hippocampal formation, the olfactory bulb, the cerebellum and the thalamus. In the peripheral nerve system, expressed in Schwann cells.

The protein resides in the secreted. It localises to the extracellular space. The protein localises to the cell membrane. It is found in the cytoplasm. Its subcellular location is the cytoskeleton. The protein resides in the nucleus. It localises to the nucleoplasm. The protein localises to the sarcolemma. It is found in the postsynaptic cell membrane. In terms of biological role, the dystroglycan complex is involved in a number of processes including laminin and basement membrane assembly, sarcolemmal stability, cell survival, peripheral nerve myelination, nodal structure, cell migration, and epithelial polarization. Functionally, extracellular peripheral glycoprotein that acts as a receptor for extracellular matrix proteins containing laminin-G domains, and for certain adenoviruses. Receptor for laminin-2 (LAMA2) and agrin in peripheral nerve Schwann cells. Also acts as a receptor for laminin LAMA5. Its function is as follows. Transmembrane protein that plays important roles in connecting the extracellular matrix to the cytoskeleton. Acts as a cell adhesion receptor in both muscle and non-muscle tissues. Receptor for both DMD and UTRN and, through these interactions, scaffolds axin to the cytoskeleton. Also functions in cell adhesion-mediated signaling and implicated in cell polarity. The polypeptide is Dystroglycan 1 (Mus musculus (Mouse)).